The following is a 77-amino-acid chain: Exodeoxyribonuclease 7 small subunit (77 aa).

This sequence belongs to the XseB family. As to quaternary structure, heterooligomer composed of large and small subunits.

Its subcellular location is the cytoplasm. The catalysed reaction is Exonucleolytic cleavage in either 5'- to 3'- or 3'- to 5'-direction to yield nucleoside 5'-phosphates.. Functionally, bidirectionally degrades single-stranded DNA into large acid-insoluble oligonucleotides, which are then degraded further into small acid-soluble oligonucleotides. The protein is Exodeoxyribonuclease 7 small subunit of Clostridium acetobutylicum (strain ATCC 824 / DSM 792 / JCM 1419 / IAM 19013 / LMG 5710 / NBRC 13948 / NRRL B-527 / VKM B-1787 / 2291 / W).